The primary structure comprises 812 residues: Plasminogen (812 aa).

The first 19 residues, 1 to 19 (MDHKEVILLFLLLLKPGQG), serve as a signal peptide directing secretion. Residues 20 to 98 (DSLDGYISTQ…RDVILFEKRV (79 aa)) form the PAN domain. Disulfide bonds link cysteine 49–cysteine 73, cysteine 53–cysteine 61, cysteine 103–cysteine 181, cysteine 124–cysteine 164, cysteine 152–cysteine 176, cysteine 185–cysteine 262, cysteine 188–cysteine 316, cysteine 206–cysteine 245, cysteine 234–cysteine 257, cysteine 275–cysteine 352, cysteine 296–cysteine 335, cysteine 324–cysteine 347, cysteine 377–cysteine 454, cysteine 398–cysteine 437, cysteine 426–cysteine 449, cysteine 481–cysteine 560, cysteine 502–cysteine 543, cysteine 531–cysteine 555, cysteine 568–cysteine 687, cysteine 578–cysteine 586, and cysteine 609–cysteine 625. 5 consecutive Kringle domains span residues 103 to 181 (CKTG…IPEC), 184 to 262 (ECMY…IPRC), 275 to 352 (CLKG…IPSC), 377 to 454 (CYQS…LKRC), and 481 to 560 (CMYG…IPLC). In terms of domain architecture, Peptidase S1 spans 582–810 (VVGGCVANPH…FVDWIEREMR (229 aa)). Serine 598 carries the post-translational modification Phosphoserine. Catalysis depends on charge relay system residues histidine 624 and aspartate 667. Residue serine 690 is modified to Phosphoserine. Disulfide bonds link cysteine 701–cysteine 768, cysteine 731–cysteine 747, and cysteine 758–cysteine 786. Residue serine 762 is the Charge relay system of the active site.

It belongs to the peptidase S1 family. Plasminogen subfamily. As to quaternary structure, interacts (both mature PLG and the angiostatin peptide) with AMOT and CSPG4. Interacts (via the Kringle domains) with HRG; the interaction tethers PLG to the cell surface and enhances its activation. Interacts (via Kringle 4 domain) with ADA; the interaction stimulates PLG activation when in complex with DPP4. Angiostatin: Interacts with ATP5F1A; the interaction inhibits most of the angiogenic effects of angiostatin. In the presence of the inhibitor, the activation involves only cleavage after Arg-581, yielding two chains held together by two disulfide bonds. In the absence of the inhibitor, the activation involves additionally the removal of the activation peptide.

The protein resides in the secreted. The enzyme catalyses Preferential cleavage: Lys-|-Xaa &gt; Arg-|-Xaa, higher selectivity than trypsin. Converts fibrin into soluble products.. With respect to regulation, converted into plasmin by plasminogen activators, both plasminogen and its activator being bound to fibrin. Cannot be activated with streptokinase. Plasmin dissolves the fibrin of blood clots and acts as a proteolytic factor in a variety of other processes including embryonic development, tissue remodeling, tumor invasion, and inflammation. In ovulation, weakens the walls of the Graafian follicle. It activates the urokinase-type plasminogen activator, collagenases and several complement zymogens, such as C1, C4 and C5. Cleavage of fibronectin and laminin leads to cell detachment and apoptosis. Also cleaves fibrin, thrombospondin and von Willebrand factor. Its role in tissue remodeling and tumor invasion may be modulated by CSPG4. Binds to cells. Functionally, angiostatin is an angiogenesis inhibitor that blocks neovascularization and growth of experimental primary and metastatic tumors in vivo. The protein is Plasminogen (Plg) of Mus musculus (Mouse).